The primary structure comprises 284 residues: NADH-cytochrome b5 reductase 1 (284 aa).

A helical membrane pass occupies residues 8 to 28 (PFIIFATVAAIISSAVAYYFF). Positions 41–144 (NDFQKFPLIE…RGPKGFFTYT (104 aa)) constitute an FAD-binding FR-type domain. Residues 124-139 (ESKKIGETIDIRGPKG) and 150-182 (SFGMIAGGTGITPMYQILTAILRNPEDKTKVSL) each bind FAD.

It belongs to the flavoprotein pyridine nucleotide cytochrome reductase family. As to quaternary structure, monomer. Component of the 2-(3-amino-3-carboxypropyl)histidine synthase complex composed of DPH1, DPH2, DPH3 and a NADH-dependent reductase, predominantly CBR1. The cofactor is FAD.

It localises to the mitochondrion outer membrane. It catalyses the reaction 2 Fe(III)-[cytochrome b5] + NADH = 2 Fe(II)-[cytochrome b5] + NAD(+) + H(+). The catalysed reaction is 2 Fe(3+)-[Dph3] + NADH = 2 Fe(2+)-[Dph3] + NAD(+) + H(+). Its pathway is protein modification; peptidyl-diphthamide biosynthesis. In terms of biological role, NADH-dependent reductase for DPH3 and cytochrome b5. Required for the first step of diphthamide biosynthesis, a post-translational modification of histidine which occurs in elongation factor 2. DPH1 and DPH2 transfer a 3-amino-3-carboxypropyl (ACP) group from S-adenosyl-L-methionine (SAM) to a histidine residue, the reaction is assisted by a reduction system comprising DPH3 and a NADH-dependent reductase, predominantly CBR1. By reducing DPH3, also involved in the formation of the tRNA wobble base modification mcm5s 2U (5-methoxycarbonylmethyl-2-thiouridine), mediated by the elongator complex. The cytochrome b5/NADH cytochrome b5 reductase electron transfer system supports the catalytic activity of several sterol biosynthetic enzymes. This Debaryomyces hansenii (strain ATCC 36239 / CBS 767 / BCRC 21394 / JCM 1990 / NBRC 0083 / IGC 2968) (Yeast) protein is NADH-cytochrome b5 reductase 1 (CBR1).